A 356-amino-acid chain; its full sequence is Anthranilate phosphoribosyltransferase (356 aa).

Residues glycine 96, 99-100 (GD), threonine 104, 106-109 (NIST), 124-132 (KHGNRSASG), and serine 136 each bind 5-phospho-alpha-D-ribose 1-diphosphate. Glycine 96 contacts anthranilate. Position 108 (serine 108) interacts with Mg(2+). Asparagine 127 contributes to the anthranilate binding site. Arginine 182 is an anthranilate binding site. The Mg(2+) site is built by aspartate 241 and glutamate 242.

The protein belongs to the anthranilate phosphoribosyltransferase family. Homodimer. Requires Mg(2+) as cofactor.

The catalysed reaction is N-(5-phospho-beta-D-ribosyl)anthranilate + diphosphate = 5-phospho-alpha-D-ribose 1-diphosphate + anthranilate. It functions in the pathway amino-acid biosynthesis; L-tryptophan biosynthesis; L-tryptophan from chorismate: step 2/5. Its function is as follows. Catalyzes the transfer of the phosphoribosyl group of 5-phosphorylribose-1-pyrophosphate (PRPP) to anthranilate to yield N-(5'-phosphoribosyl)-anthranilate (PRA). This is Anthranilate phosphoribosyltransferase from Trichodesmium erythraeum (strain IMS101).